We begin with the raw amino-acid sequence, 290 residues long: Probable adenylate kinase 2, chloroplastic (290 aa).

Low complexity predominate over residues 1–10 (MASSMAATAT). A disordered region spans residues 1–37 (MASSMAATATLSPPVLSAERPTVRGGLFLPPSPATSR). The N-terminal 61 residues, 1–61 (MASSMAATAT…ATRKPRSLPR (61 aa)), are a transit peptide targeting the chloroplast. 83-88 (ASGKGT) contributes to the ATP binding site. The interval 103-132 (SAGDLLRAEIAAGSENGKRAKEFMEKGQLV) is NMP. Residues Arg109, 130 to 132 (QLV), 159 to 162 (GYPR), and Gln166 contribute to the AMP site. Residues Arg193, Arg197, and 206-207 (IY) contribute to the ATP site. The tract at residues 196-229 (GRRLDPVTGKIYHLKYSPPENEEIASRLTQRFDD) is LID. Positions 226 and 237 each coordinate AMP.

It belongs to the adenylate kinase family.

Its subcellular location is the plastid. The protein resides in the chloroplast. It carries out the reaction AMP + ATP = 2 ADP. Its function is as follows. Catalyzes the reversible transfer of the terminal phosphate group between ATP and AMP. Plays an important role in cellular energy homeostasis and in adenine nucleotide metabolism. This Oryza sativa subsp. japonica (Rice) protein is Probable adenylate kinase 2, chloroplastic.